We begin with the raw amino-acid sequence, 177 residues long: MSRVGKLPITIPEGVKIGLNDLEVKISGPKGELSKTFKGNIAISLVENKLLVKPLAANKNARAMWGTARSIISNMVTGVKEGFKLKLEINGVGYRAMVKGKYLNLMLAKSHNTKIEIPSDIKIEMPKQNIIILEGTDKEKLGQFASIIIKQRPPEPYKGKGIKFENQFIPRKEGKKN.

Belongs to the universal ribosomal protein uL6 family. Part of the 50S ribosomal subunit.

This protein binds to the 23S rRNA, and is important in its secondary structure. It is located near the subunit interface in the base of the L7/L12 stalk, and near the tRNA binding site of the peptidyltransferase center. In Rickettsia massiliae (strain Mtu5), this protein is Large ribosomal subunit protein uL6.